Consider the following 60-residue polypeptide: Large ribosomal subunit protein bL32 (60 aa).

This sequence belongs to the bacterial ribosomal protein bL32 family.

This is Large ribosomal subunit protein bL32 (rpmF) from Thermotoga maritima (strain ATCC 43589 / DSM 3109 / JCM 10099 / NBRC 100826 / MSB8).